The sequence spans 251 residues: Ubiquinone/menaquinone biosynthesis C-methyltransferase UbiE (251 aa).

S-adenosyl-L-methionine is bound by residues T74, D95, and 123-124 (NA).

Belongs to the class I-like SAM-binding methyltransferase superfamily. MenG/UbiE family.

It carries out the reaction a 2-demethylmenaquinol + S-adenosyl-L-methionine = a menaquinol + S-adenosyl-L-homocysteine + H(+). The enzyme catalyses a 2-methoxy-6-(all-trans-polyprenyl)benzene-1,4-diol + S-adenosyl-L-methionine = a 5-methoxy-2-methyl-3-(all-trans-polyprenyl)benzene-1,4-diol + S-adenosyl-L-homocysteine + H(+). It functions in the pathway quinol/quinone metabolism; menaquinone biosynthesis; menaquinol from 1,4-dihydroxy-2-naphthoate: step 2/2. It participates in cofactor biosynthesis; ubiquinone biosynthesis. Its function is as follows. Methyltransferase required for the conversion of demethylmenaquinol (DMKH2) to menaquinol (MKH2) and the conversion of 2-polyprenyl-6-methoxy-1,4-benzoquinol (DDMQH2) to 2-polyprenyl-3-methyl-6-methoxy-1,4-benzoquinol (DMQH2). In Erwinia tasmaniensis (strain DSM 17950 / CFBP 7177 / CIP 109463 / NCPPB 4357 / Et1/99), this protein is Ubiquinone/menaquinone biosynthesis C-methyltransferase UbiE.